Here is a 324-residue protein sequence, read N- to C-terminus: MAKMEFQKGSSDQRTFISAILNMLSLGLSTASLLSSEWFVGTQKVPKPLCGQSLAAKCFDMPMSLDGGIANTSAQEVVQYTWETGDDRFSFLAFRSGMWLSCEETMEEPGEKCRRFIELTPPAQRWLSLGAQTAYIGLQLISFLLLLTDLLLTTNPGCGLKLSAFAAVSLVLSGLLGMVAHMLYSQVFQATANLGPEDWRPHSWNYGWAFYTAWVSFTCCMASAVTTFNMYTRMVLEFKCRHSKSFNTNPSCLAQHHRCFLPPPLTCTTHAGEPLSSCHQYPSHPIRSVSEAIDLYSALQDKEFQQGISQELKEVVEPSVEEQR.

4 consecutive transmembrane segments (helical) span residues 15-35, 127-147, 164-184, and 208-228; these read TFIS…SLLS, LSLG…LLLL, AFAA…HMLY, and WAFY…VTTF.

The protein belongs to the GSG1 family. Interacts with PAPOLB. As to expression, expressed in spermatogenic cells (at protein level). Expressed in germ cells within the testis from day 21 onwards.

It is found in the endoplasmic reticulum membrane. May cause the redistribution of PAPOLB from the cytosol to the endoplasmic reticulum. The protein is Germ cell-specific gene 1 protein (Gsg1) of Mus musculus (Mouse).